Reading from the N-terminus, the 439-residue chain is Probable cinnamyl alcohol dehydrogenase 8C (439 aa).

C120 serves as a coordination point for Zn(2+). Position 122 (T122) interacts with NADP(+). Zn(2+) contacts are provided by H142, E143, C173, C176, C179, C187, and C239. Residues T243, 264 to 269 (GLGGLG), 287 to 292 (STSPGK), T327, G351, and 374 to 376 (NCV) each bind NADP(+).

This sequence belongs to the zinc-containing alcohol dehydrogenase family. As to quaternary structure, homodimer. Zn(2+) serves as cofactor.

It carries out the reaction (E)-cinnamyl alcohol + NADP(+) = (E)-cinnamaldehyde + NADPH + H(+). It catalyses the reaction (E)-coniferol + NADP(+) = (E)-coniferaldehyde + NADPH + H(+). The enzyme catalyses (E)-sinapyl alcohol + NADP(+) = (E)-sinapaldehyde + NADPH + H(+). The catalysed reaction is (E)-4-coumaroyl alcohol + NADP(+) = (E)-4-coumaraldehyde + NADPH + H(+). It carries out the reaction (E)-caffeyl alcohol + NADP(+) = (E)-caffeyl aldehyde + NADPH + H(+). It participates in aromatic compound metabolism; phenylpropanoid biosynthesis. In terms of biological role, involved in lignin biosynthesis. Catalyzes the final step specific for the production of lignin monomers. Catalyzes the NADPH-dependent reduction of coniferaldehyde, 5-hydroxyconiferaldehyde, sinapaldehyde, 4-coumaraldehyde and caffeyl aldehyde to their respective alcohols. This Oryza sativa subsp. japonica (Rice) protein is Probable cinnamyl alcohol dehydrogenase 8C.